We begin with the raw amino-acid sequence, 315 residues long: Thioredoxin reductase (315 aa).

Position 34–41 (34–41 (EGMKVGGQ)) interacts with FAD. A disulfide bridge links Cys134 with Cys137. 282–291 (DIRVKSLRQV) is a binding site for FAD.

Belongs to the class-II pyridine nucleotide-disulfide oxidoreductase family. As to quaternary structure, homodimer. The cofactor is FAD.

It is found in the cytoplasm. The enzyme catalyses [thioredoxin]-dithiol + NADP(+) = [thioredoxin]-disulfide + NADPH + H(+). In Peptoclostridium litorale (Clostridium litorale), this protein is Thioredoxin reductase (trxB).